The sequence spans 263 residues: MNDNFKKQPHHLIYEELLQQGITLGITTRGDGLSDYPKNAFNMARYIDDRPYNITQHQLQLAEEIAFDRKNWVFPIQTHENKVACITKDDIGTNIDTLTDALHGIDAMYTYDSNVLLTMCYADCVPVYFYSTKHHFIALAHAGWRGTYTEIVKEVLKHVNFDLKDLHVVIGPSTSSSYEINDDIKNKFETLPIDSANYIETRGRDRHGIDLKKANAALLNYYGVPKENIYTTAYATSEHLELFFSYRLEKGQTGRMLAFIGQQ.

3 residues coordinate Zn(2+): His79, Cys124, and His141.

Belongs to the purine nucleoside phosphorylase YfiH/LACC1 family. As to quaternary structure, homodimer. Cu(2+) is required as a cofactor. The cofactor is Zn(2+).

The enzyme catalyses adenosine + phosphate = alpha-D-ribose 1-phosphate + adenine. It carries out the reaction S-methyl-5'-thioadenosine + phosphate = 5-(methylsulfanyl)-alpha-D-ribose 1-phosphate + adenine. It catalyses the reaction inosine + phosphate = alpha-D-ribose 1-phosphate + hypoxanthine. The catalysed reaction is adenosine + H2O + H(+) = inosine + NH4(+). In terms of biological role, purine nucleoside enzyme that catalyzes the phosphorolysis of adenosine and inosine nucleosides, yielding D-ribose 1-phosphate and the respective free bases, adenine and hypoxanthine. Also catalyzes the phosphorolysis of S-methyl-5'-thioadenosine into adenine and S-methyl-5-thio-alpha-D-ribose 1-phosphate. Also has adenosine deaminase activity. In Staphylococcus aureus (strain MSSA476), this protein is Purine nucleoside phosphorylase SAS1121.